The chain runs to 272 residues: Pyrroline-5-carboxylate reductase (272 aa).

It belongs to the pyrroline-5-carboxylate reductase family.

Its subcellular location is the cytoplasm. It catalyses the reaction L-proline + NADP(+) = (S)-1-pyrroline-5-carboxylate + NADPH + 2 H(+). The catalysed reaction is L-proline + NAD(+) = (S)-1-pyrroline-5-carboxylate + NADH + 2 H(+). The protein operates within amino-acid biosynthesis; L-proline biosynthesis; L-proline from L-glutamate 5-semialdehyde: step 1/1. Catalyzes the reduction of 1-pyrroline-5-carboxylate (PCA) to L-proline. This chain is Pyrroline-5-carboxylate reductase, found in Vibrio alginolyticus.